The primary structure comprises 201 residues: Large ribosomal subunit protein uL4 (201 aa).

Residues 44-68 (KAQKTRSEVAGTTKKSKKQKGGGAR) form a disordered region.

Belongs to the universal ribosomal protein uL4 family. In terms of assembly, part of the 50S ribosomal subunit.

In terms of biological role, one of the primary rRNA binding proteins, this protein initially binds near the 5'-end of the 23S rRNA. It is important during the early stages of 50S assembly. It makes multiple contacts with different domains of the 23S rRNA in the assembled 50S subunit and ribosome. Forms part of the polypeptide exit tunnel. This Xanthomonas oryzae pv. oryzae (strain MAFF 311018) protein is Large ribosomal subunit protein uL4.